Here is a 312-residue protein sequence, read N- to C-terminus: tRNA dimethylallyltransferase (312 aa).

Residue 10-17 (GPTASGKS) coordinates ATP. 12–17 (TASGKS) is a binding site for substrate. The tract at residues 35–38 (DSKQ) is interaction with substrate tRNA.

This sequence belongs to the IPP transferase family. As to quaternary structure, monomer. The cofactor is Mg(2+).

It carries out the reaction adenosine(37) in tRNA + dimethylallyl diphosphate = N(6)-dimethylallyladenosine(37) in tRNA + diphosphate. Its function is as follows. Catalyzes the transfer of a dimethylallyl group onto the adenine at position 37 in tRNAs that read codons beginning with uridine, leading to the formation of N6-(dimethylallyl)adenosine (i(6)A). The chain is tRNA dimethylallyltransferase from Anaplasma phagocytophilum (strain HZ).